A 195-amino-acid chain; its full sequence is Nucleoside-triphosphatase THEP1 (195 aa).

ATP contacts are provided by residues Gly11–Ser18 and Val103–Gly110.

The protein belongs to the THEP1 NTPase family.

The catalysed reaction is a ribonucleoside 5'-triphosphate + H2O = a ribonucleoside 5'-diphosphate + phosphate + H(+). Its function is as follows. Has nucleotide phosphatase activity towards ATP, GTP, CTP, TTP and UTP. May hydrolyze nucleoside diphosphates with lower efficiency. This chain is Nucleoside-triphosphatase THEP1, found in Korarchaeum cryptofilum (strain OPF8).